A 344-amino-acid polypeptide reads, in one-letter code: Dihydroorotate dehydrogenase (quinone) (344 aa).

FMN-binding positions include 65–69 (AGLDK) and threonine 89. Lysine 69 is a substrate binding site. Position 114–118 (114–118 (NRMGF)) interacts with substrate. 2 residues coordinate FMN: asparagine 145 and asparagine 178. Substrate is bound at residue asparagine 178. The active-site Nucleophile is serine 181. Asparagine 183 contributes to the substrate binding site. 2 residues coordinate FMN: lysine 223 and threonine 251. 252-253 (NT) contributes to the substrate binding site. FMN contacts are provided by residues glycine 274, glycine 303, and 324 to 325 (YS).

The protein belongs to the dihydroorotate dehydrogenase family. Type 2 subfamily. In terms of assembly, monomer. FMN serves as cofactor.

The protein localises to the cell membrane. The enzyme catalyses (S)-dihydroorotate + a quinone = orotate + a quinol. It functions in the pathway pyrimidine metabolism; UMP biosynthesis via de novo pathway; orotate from (S)-dihydroorotate (quinone route): step 1/1. Catalyzes the conversion of dihydroorotate to orotate with quinone as electron acceptor. The sequence is that of Dihydroorotate dehydrogenase (quinone) from Cupriavidus pinatubonensis (strain JMP 134 / LMG 1197) (Cupriavidus necator (strain JMP 134)).